A 237-amino-acid polypeptide reads, in one-letter code: Uridylate kinase (237 aa).

An ATP-binding site is contributed by 12–15 (KLSG). Glycine 53 lines the UMP pocket. 2 residues coordinate ATP: glycine 54 and arginine 58. UMP contacts are provided by residues aspartate 73 and 134 to 141 (TGNPYFTT). Residues threonine 161, tyrosine 167, and aspartate 170 each coordinate ATP.

Belongs to the UMP kinase family. Homohexamer.

Its subcellular location is the cytoplasm. It catalyses the reaction UMP + ATP = UDP + ADP. It functions in the pathway pyrimidine metabolism; CTP biosynthesis via de novo pathway; UDP from UMP (UMPK route): step 1/1. Inhibited by UTP. In terms of biological role, catalyzes the reversible phosphorylation of UMP to UDP. The protein is Uridylate kinase of Rhizorhabdus wittichii (strain DSM 6014 / CCUG 31198 / JCM 15750 / NBRC 105917 / EY 4224 / RW1) (Sphingomonas wittichii).